The primary structure comprises 252 residues: Chitooligosaccharide deacetylase (252 aa).

The Mg(2+) site is built by H61 and H125.

The protein belongs to the YdjC deacetylase family. ChbG subfamily. In terms of assembly, homodimer. The cofactor is Mg(2+).

It is found in the cytoplasm. It catalyses the reaction N,N'-diacetylchitobiose + H2O = N-acetyl-beta-D-glucosaminyl-(1-&gt;4)-D-glucosamine + acetate. The catalysed reaction is diacetylchitobiose-6'-phosphate + H2O = N'-monoacetylchitobiose-6'-phosphate + acetate. Its pathway is glycan degradation; chitin degradation. Its function is as follows. Involved in the degradation of chitin. ChbG is essential for growth on the acetylated chitooligosaccharides chitobiose and chitotriose but is dispensable for growth on cellobiose and chitosan dimer, the deacetylated form of chitobiose. Deacetylation of chitobiose-6-P and chitotriose-6-P is necessary for both the activation of the chb promoter by the regulatory protein ChbR and the hydrolysis of phosphorylated beta-glucosides by the phospho-beta-glucosidase ChbF. Catalyzes the removal of only one acetyl group from chitobiose-6-P to yield monoacetylchitobiose-6-P, the inducer of ChbR and the substrate of ChbF. The polypeptide is Chitooligosaccharide deacetylase (Enterobacter sp. (strain 638)).